The sequence spans 379 residues: cAMP-dependent protein kinase type I-alpha regulatory subunit (379 aa).

An N-acetylmethionine modification is found at Met1. The segment at Met1–Val134 is dimerization and phosphorylation. The disordered stretch occupies residues Gln63–Arg93. The short motif at Arg94–Ile98 is the Pseudophosphorylation motif element. 3',5'-cyclic AMP-binding positions include Leu135–Ser252, Glu200, Arg209, Ile253–Val379, Glu324, and Arg333.

Belongs to the cAMP-dependent kinase regulatory chain family. The inactive holoenzyme is composed of two regulatory chains and two catalytic chains. Activation by cAMP releases the two active catalytic monomers and the regulatory dimer. Interacts with PRKACA and PRKACB. Interacts with PRRC1; resulting in PKA activation. The pseudophosphorylation site binds to the substrate-binding region of the catalytic chain, resulting in the inhibition of its activity.

The protein localises to the cell membrane. Functionally, regulatory subunit of the cAMP-dependent protein kinases involved in cAMP signaling in cells. The sequence is that of cAMP-dependent protein kinase type I-alpha regulatory subunit (prkar1aa) from Danio rerio (Zebrafish).